The primary structure comprises 963 residues: Spliceosome associated factor 3, U4/U6 recycling protein (963 aa).

Positions 1–11 (MATAAETSASE) are enriched in low complexity. Disordered stretches follow at residues 1-36 (MATA…RTRR) and 50-90 (TMGP…YDEE). Position 2 is an N-acetylalanine (Ala2). The mediates interaction with PRPF3 stretch occupies residues 2–351 (ATAAETSASE…LVPDLWIRYS (350 aa)). Residues Ser10 and Ser16 each carry the phosphoserine modification. The span at 14-23 (AESKAGPKAD) shows a compositional bias: basic and acidic residues. The stretch at 21–46 (KADGEEDEVKAARTRRKVLSRAVAAA) forms a coiled coil. Residues 57–69 (QQEEGVSESDGDE) show a composition bias toward acidic residues. Positions 82–110 (EYEWEYDEEEEKNQLEIERLEEQLSINVY) form a coiled coil. HAT repeat units follow at residues 126–158 (GELT…DEIS), 164–195 (LDRE…YSVG), 201–237 (GGLE…FESA), 242–275 (ARLE…WSED), 324–356 (GDPA…YLDR), 359–391 (KVKD…AMER), 394–430 (VDHQ…YLRR), and 487–520 (NNMQ…LERA). Ser215 is modified (phosphoserine). Residues 487–520 (NNMQKARELWDSIMTRGNAKYANMWLEYYNLERA) form a required for interaction with USP4 region. The tract at residues 537-953 (CTSDYPEHVC…AATEAPKMSN (417 aa)) is necessary and sufficient for U6 snRNA binding. Positions 559–619 (LEDWDIAVQK…ALKKKKKIRG (61 aa)) form a coiled coil. Residues 590 to 601 (LVQQEEEKAEQR) are compositionally biased toward basic and acidic residues. Residues 590-694 (LVQQEEEKAE…AASLKRDMPK (105 aa)) form a disordered region. A required for nuclear localization region spans residues 600-670 (QRKRARAEKK…EVAAGPAGKC (71 aa)). A Nuclear localization signal motif is present at residues 601-608 (RKRARAEK). The span at 602-617 (KRARAEKKALKKKKKI) shows a compositional bias: basic residues. The segment covering 626–639 (DEDDEKEWGDDEEE) has biased composition (acidic residues). Residue Ser650 is modified to Phosphoserine. At Thr657 the chain carries Phosphothreonine. Residues 677–694 (PPSKQKEKAASLKRDMPK) are compositionally biased toward basic and acidic residues. Residues 704-782 (ITVFVSNLPY…RPMFVSPCVD (79 aa)) form the RRM 1 domain. 3 positions are modified to phosphoserine: Ser769, Ser795, and Ser852. The RRM 2 domain maps to 801–878 (HKLFISGLPF…NIIKVAISNP (78 aa)). The segment at 878–898 (PPQRKVPEKPETRKAPGGPML) is disordered. The segment covering 882–891 (KVPEKPETRK) has biased composition (basic and acidic residues). Arg906 carries the post-translational modification Omega-N-methylarginine. The tract at residues 920–948 (LQRPSAAAPQAENGPAAAPAVAAPAATEA) is disordered. The segment covering 925-948 (AAAPQAENGPAAAPAVAAPAATEA) has biased composition (low complexity).

Component of the 7SK snRNP complex at least composed of P-TEFb (composed of CDK9 and CCNT1/cyclin-T1), HEXIM1, HEXIM2, BCDIN3, SART3 proteins and 7SK and U6 snRNAs. Interacts with AGO1 and AGO2. Interacts with PRPF3 and USP4; the interaction with PRPF3 is direct and recruits USP4 to its substrate PRPF3. Interacts with USP15; the interaction is direct. Interacts with HIV-1 Tat. In terms of tissue distribution, ubiquitously expressed.

Its subcellular location is the nucleus. It is found in the nucleoplasm. It localises to the cajal body. The protein localises to the nucleus speckle. The protein resides in the cytoplasm. Functionally, U6 snRNP-binding protein that functions as a recycling factor of the splicing machinery. Promotes the initial reassembly of U4 and U6 snRNPs following their ejection from the spliceosome during its maturation. Also binds U6atac snRNPs and may function as a recycling factor for U4atac/U6atac spliceosomal snRNP, an initial step in the assembly of U12-type spliceosomal complex. The U12-type spliceosomal complex plays a role in the splicing of introns with non-canonical splice sites. May also function as a substrate-targeting factor for deubiquitinases like USP4 and USP15. Recruits USP4 to ubiquitinated PRPF3 within the U4/U5/U6 tri-snRNP complex, promoting PRPF3 deubiquitination and thereby regulating the spliceosome U4/U5/U6 tri-snRNP spliceosomal complex disassembly. May also recruit the deubiquitinase USP15 to histone H2B and mediate histone deubiquitination, thereby regulating gene expression and/or DNA repair. May play a role in hematopoiesis probably through transcription regulation of specific genes including MYC. Regulates Tat transactivation activity through direct interaction. May be a cellular factor for HIV-1 gene expression and viral replication. The protein is Spliceosome associated factor 3, U4/U6 recycling protein of Homo sapiens (Human).